Consider the following 104-residue polypeptide: Large ribosomal subunit protein bL21 (104 aa).

The protein belongs to the bacterial ribosomal protein bL21 family. Part of the 50S ribosomal subunit. Contacts protein L20.

In terms of biological role, this protein binds to 23S rRNA in the presence of protein L20. This chain is Large ribosomal subunit protein bL21, found in Clostridium botulinum (strain ATCC 19397 / Type A).